The sequence spans 209 residues: Probable GTP-binding protein EngB (209 aa).

Residues 24–198 form the EngB-type G domain; sequence EGMEVAFAGR…HGILDQWLGL (175 aa). Residues 32–39, 59–63, 77–80, 144–147, and 177–179 each bind GTP; these read GRSNAGKS, GRTQL, DLPG, TKAD, and FSA. 2 residues coordinate Mg(2+): Ser39 and Thr61.

It belongs to the TRAFAC class TrmE-Era-EngA-EngB-Septin-like GTPase superfamily. EngB GTPase family. The cofactor is Mg(2+).

Functionally, necessary for normal cell division and for the maintenance of normal septation. This is Probable GTP-binding protein EngB from Thioalkalivibrio sulfidiphilus (strain HL-EbGR7).